The sequence spans 88 residues: Protein GOLVEN 10 (88 aa).

Positions 1–22 (MSSIHVASMILLLFLFLHHSDS) are cleaved as a signal peptide. Positions 23–75 (RHLDNVHITASRFSLVKDQNVVSSSTSKEPVKVSRFVPGPLKHHHRRPPLLFA) are excised as a propeptide. The segment at 44–88 (VSSSTSKEPVKVSRFVPGPLKHHHRRPPLLFADYPKPSTRPPRHN) is disordered. Tyrosine 77 carries the post-translational modification Sulfotyrosine. Proline 85 is subject to Hydroxyproline.

The protein belongs to the RGF family. As to quaternary structure, binds to LRR receptor-like serine/threonine-protein kinases RGI1, RGI2 and RGI3 to trigger their dimerization with SERK proteins and subsequent signaling. Expressed in roots, shoots, leaves and flowers.

It is found in the secreted. The protein localises to the endoplasmic reticulum. Functionally, signaling peptide (root growth factor) that maintains the postembryonic root stem cell niche. Regulates the pattern of root growth and lateral root development by modulating the length and the number of cortical cells in the root apical meristem (RAM), and the anticlinal asymmetric cell divisions in lateral root initiation cells. This is Protein GOLVEN 10 from Arabidopsis thaliana (Mouse-ear cress).